A 30-amino-acid chain; its full sequence is Cysteine-rich venom protein hematin (30 aa).

Belongs to the CRISP family. In terms of processing, contains 8 disulfide bonds. In terms of tissue distribution, expressed by the venom gland.

The protein localises to the secreted. Inhibits calcium-activated potassium channels (KCa), voltage-gated potassium channel (Kv), and the calcium release channel/ryanodine receptor (RyR). This Hemachatus haemachatus (Rinkhals) protein is Cysteine-rich venom protein hematin.